Reading from the N-terminus, the 367-residue chain is 3-dehydroquinate synthase (367 aa).

NAD(+)-binding positions include 99 to 103, 123 to 124, Lys-136, Lys-145, and 163 to 166; these read GVVGD, TT, and FLRT. 3 residues coordinate Zn(2+): Glu-178, His-242, and His-259.

It belongs to the sugar phosphate cyclases superfamily. Dehydroquinate synthase family. Requires Co(2+) as cofactor. Zn(2+) serves as cofactor. It depends on NAD(+) as a cofactor.

The protein resides in the cytoplasm. It catalyses the reaction 7-phospho-2-dehydro-3-deoxy-D-arabino-heptonate = 3-dehydroquinate + phosphate. It functions in the pathway metabolic intermediate biosynthesis; chorismate biosynthesis; chorismate from D-erythrose 4-phosphate and phosphoenolpyruvate: step 2/7. Its function is as follows. Catalyzes the conversion of 3-deoxy-D-arabino-heptulosonate 7-phosphate (DAHP) to dehydroquinate (DHQ). This Chlorobaculum parvum (strain DSM 263 / NCIMB 8327) (Chlorobium vibrioforme subsp. thiosulfatophilum) protein is 3-dehydroquinate synthase.